Reading from the N-terminus, the 1138-residue chain is MDNLQWKYDMAGIKSAREQGYRRKIVARDISVSTGAKQYAYLLPPMYNLFLKQVHEKRDKNLYEVIDEKSPVRLYFDCDSFDRDEGGYGLDLDCKTSLKLFHDLLKNFILFLNPNSTANMKAHITRCIRQDKPNKHSFHAIYPGIVFKNINELKMFVLSFAYHLFEDKNDMRLAFKKQGKNKTLGRAFFDLAVYTKDRCFRLPFQSKKGDSAKLIPLREITLEEIENNICQPEDFVRKPDNVDTSIGDLLSAAVMEKYTGVKLSTYVRAYQEGVIKEKIKTKCIEKRNGSKKIKITTPRLEIEWDQMKIPGVETVEIREDKDFLQYFDPVELRGGFYSLYIHLLKDICYFLPDEVLKQWMGHTNDKKANYLIKSNRKKGAEYAMTGGYALELLAKIYGRCNVRDLRDPIPKPTNSFRNTTRINVTPDRWRPIEVSDMKKFFIDSQVRDLKTNTYNDCGMITAMADVDYGEKIALSKKLKMDTKKKCQFITGQMGASKSTGVMDYMVFSMISSIIANAMVIVPRCSLAGQTVKKIYNTYKEMISDKDRMKKIKNKRKIVINPYFSQAFTIGGLQEIYDELTSEITTTDTCGTICVCVLNSISKVRSHVFDTIIMDEPVTCVDNFYIDSEKKQKIPVKNILEKKGNTIAVTDLMIDMLMKITRNANQLIFIDAAFTEDVIRLCETLYWGAYTMQGTVDDWRKVLENEGVDQSNIRHKIKRIKDENILIRKWIQNKKEWNYDKKTDTRTIISTTEIDHFRLFRPIEYICVYDKKITRPIYTHIIKYDCKQTMMNKLLDDVREGKKLVVYCSVGKETASIINTINSMTSRECIVLPKVGGVTAKSLKGKENQLDEYMRSMEVVVVSSVLGTGTSYPEEGLFDAAYMFCKVTYGTPQISDMIQLSARVRATTTRTLHYHITTSTSGHKPNGDALKNSDYHGISFKDHLDKTYTSRDHLHRVHMSRPSLASEFMRNELQQSFGHVIDETLEKKLPTHETNSEIEKEKHSDGKRKESKMAQEIDKHHPDVYTDVMATSNRNMTDEDGTKYQTIVRHCVVRTNNTTEPDRTMDVDWDSSQGTSGEIFHRPVTVDRSRITEQLVATPGPSTSRKRKLSDDDEYEKYDSGIEDIETDVDEEEEVQNKL.

Disordered regions lie at residues 985–1015 (EKKL…MAQE) and 1094–1138 (LVAT…QNKL). Positions 1110-1138 (DDDEYEKYDSGIEDIETDVDEEEEVQNKL) are enriched in acidic residues.

This is an uncharacterized protein from Ostreid herpesvirus 1 (isolate France) (OsHV-1).